The primary structure comprises 217 residues: Nucleoredoxin-like protein 1 (217 aa).

In terms of domain architecture, Thioredoxin spans 1–164 (MASLFSGRIL…AAELLDRSFL (164 aa)). A compositionally biased stretch (basic and acidic residues) spans 188 to 204 (VDRDVGRERGRNGRDSG). Positions 188–217 (VDRDVGRERGRNGRDSGDPQGDAGTRAELW) are disordered.

This sequence belongs to the nucleoredoxin family. Interacts with isoform 1 of BSG. In terms of tissue distribution, expressed in the retina (at protein level). Expressed predominantly by photoreceptors in both the inner and outer nuclear layer (at protein level). Not expressed in the testis, spleen, intestine, lung, cerebellum, or kidney.

Its subcellular location is the cell projection. The protein resides in the cilium. It is found in the photoreceptor outer segment. Its function is as follows. Plays an important role in retinal cone photoreceptor survival. In association with glucose transporter SLC16A1/GLUT1 and BSG, promotes retinal cone survival by enhancing aerobic glycolysis and accelerating the entry of glucose into photoreceptors. May play a role in cone cell viability, slowing down cone degeneration, does not seem to play a role in degenerating rods. The chain is Nucleoredoxin-like protein 1 (Nxnl1) from Mus musculus (Mouse).